A 263-amino-acid polypeptide reads, in one-letter code: MPEGPEIRRAADNLEAAIKGKPLTDVWFAFPQLKTYQSQLIGQHVTHVETRGKALLTHFSNDLTLYSHNQLYGVWRVVDTGEEPQTTRVLRVKLQTADKTILLYSASDIEMLRPEQLTTHPFLQRVGPDVLDPNLTPEVVKERLLSPRFRNRQFAGLLLDQAFLAGLGNYLRVEILWQVGLTGNHKAKDLNAAQLDALAHALLEIPRFSYATRGQVDENKHHGALFRFKVFHRDGEPCERCGSIIEKTTLSSRPFYWCPGCQH.

The active-site Schiff-base intermediate with DNA is the proline 2. Glutamate 3 acts as the Proton donor in catalysis. Residue lysine 53 is the Proton donor; for beta-elimination activity of the active site. Glutamine 70, arginine 125, and asparagine 169 together coordinate DNA. The FPG-type zinc finger occupies 229–263; the sequence is KVFHRDGEPCERCGSIIEKTTLSSRPFYWCPGCQH. The Proton donor; for delta-elimination activity role is filled by arginine 253.

The protein belongs to the FPG family. Requires Zn(2+) as cofactor.

The enzyme catalyses 2'-deoxyribonucleotide-(2'-deoxyribose 5'-phosphate)-2'-deoxyribonucleotide-DNA = a 3'-end 2'-deoxyribonucleotide-(2,3-dehydro-2,3-deoxyribose 5'-phosphate)-DNA + a 5'-end 5'-phospho-2'-deoxyribonucleoside-DNA + H(+). In terms of biological role, involved in base excision repair of DNA damaged by oxidation or by mutagenic agents. Acts as a DNA glycosylase that recognizes and removes damaged bases. Has a preference for oxidized pyrimidines, such as thymine glycol, 5,6-dihydrouracil and 5,6-dihydrothymine. Has AP (apurinic/apyrimidinic) lyase activity and introduces nicks in the DNA strand. Cleaves the DNA backbone by beta-delta elimination to generate a single-strand break at the site of the removed base with both 3'- and 5'-phosphates. The chain is Endonuclease 8 from Escherichia coli O9:H4 (strain HS).